A 319-amino-acid polypeptide reads, in one-letter code: Small ribosomal subunit protein RACK1 (319 aa).

Ala2 carries the post-translational modification N-acetylalanine. WD repeat units lie at residues Gly15 to Gly55, Gly63 to Arg102, Gly105 to Leu145, His147 to Asp191, Gly194 to Thr233, Ser235 to Arg275, and Ala284 to Asn319. Glycyl lysine isopeptide (Lys-Gly) (interchain with G-Cter in ubiquitin) cross-links involve residues Lys46 and Lys53. Position 96 is a phosphothreonine (Thr96). Glycyl lysine isopeptide (Lys-Gly) (interchain with G-Cter in ubiquitin) cross-links involve residues Lys107, Lys137, and Lys161. Thr168 carries the post-translational modification Phosphothreonine.

This sequence belongs to the WD repeat G protein beta family. Ribosomal protein RACK1 subfamily. Component of the small ribosomal subunit (SSU). Mature yeast ribosomes consist of a small (40S) and a large (60S) subunit. The 40S small subunit contains 1 molecule of ribosomal RNA (18S rRNA) and 33 different proteins (encoded by 57 genes). The large 60S subunit contains 3 rRNA molecules (25S, 5.8S and 5S rRNA) and 46 different proteins (encoded by 81 genes). RACK1 is located at the head of the SSU in the vicinity of the mRNA exit channel. RACK1 interacts with the mRNA-binding protein SCP16. RACK1 also exists simultaneously as a homodimer in a cytosolic non-ribosome-bound form.

The protein resides in the cytoplasm. Component of the ribosome, a large ribonucleoprotein complex responsible for the synthesis of proteins in the cell. The small ribosomal subunit (SSU) binds messenger RNAs (mRNAs) and translates the encoded message by selecting cognate aminoacyl-transfer RNA (tRNA) molecules. The large subunit (LSU) contains the ribosomal catalytic site termed the peptidyl transferase center (PTC), which catalyzes the formation of peptide bonds, thereby polymerizing the amino acids delivered by tRNAs into a polypeptide chain. The nascent polypeptides leave the ribosome through a tunnel in the LSU and interact with protein factors that function in enzymatic processing, targeting, and the membrane insertion of nascent chains at the exit of the ribosomal tunnel. Located at the head of the 40S ribosomal subunit in the vicinity of the mRNA exit channel, RACK1 serves as a scaffold protein that can recruit other proteins to the ribosome. Involved in induction of the ribosome quality control (RQC) pathway; a pathway that degrades nascent peptide chains during problematic translation. Involved in the negative regulation of translation of a specific subset of proteins. The sequence is that of Small ribosomal subunit protein RACK1 from Saccharomyces cerevisiae (strain ATCC 204508 / S288c) (Baker's yeast).